Consider the following 704-residue polypeptide: Translational regulator orb2 (704 aa).

The interval 1–64 (MDSLKLPKAN…PPGLGSSTPI (64 aa)) is disordered. Residues 1–87 (MDSLKLPKAN…ILQSFHHSKH (87 aa)) are gln/His-rich. The segment covering 9–42 (ANSATSSASGSNSNLSGSTSASASAATSPTSSGT) has biased composition (low complexity). Phosphoserine is present on residues Ser-74, Ser-88, and Ser-100. Disordered stretches follow at residues 82–106 (FHHSKHSPSGGASGGGDASPTSNLL), 166–266 (LPNL…GVSP), and 417–438 (SPSRLSPHSPHSPIQGGNGGNV). A gln/His-rich region spans residues 163-240 (CGGLPNLNLN…PSSPGGGGGG (78 aa)). Low complexity-rich tracts occupy residues 176–205 (QLHQQQHQQQHQQHQQHQQQQQLHQHQQQL), 218–233 (QQQQLRESGGSHSPSS), and 417–429 (SPSRLSPHSPHSP). Phosphoserine is present on residues Ser-425 and Ser-428. 2 consecutive RRM domains span residues 447–538 (RKVF…PWRL) and 555–637 (KTVF…PYVL).

Monomer. Upon neuronal stimulation, forms stable amyloid-like oligomers composed of isoform A and isoform B which are required for formation of persistent long-term memory. Isoform A is critical for oligomer formation. Phe-5 of isoform A is required for amyloid-like oligomerization. Rapidly forms amyloids and toxic intermediates are extremely transient. Unlike in the adult nervous system, remains monomeric in the early embryo. Interacts with the translational regulator bol. Interacts with Tob; the interaction is enhanced by neuronal stimulation, stabilizes isoform A and induces oligomerization. Post-translationally, phosphorylation regulates interaction with Tob and oligomerization. Protein phosphatase 2A keeps both Orb2 and Tob in an unphosphorylated form. Following synaptic activation, unphosphorylated Orb2 is bound and stabilized by unphosphorylated Tob. Tob recruits activated LimK which phosphorylates both Orb2 and Tob and enhances Orb2 oligomerization. In terms of tissue distribution, broadly expressed throughout the nervous system of embryo, larva and adult including the ventral nerve cord and brain (at protein level). In early embryos, deposited maternally and distributed uniformly throughout the embryo until the extended germband stage. By mid-embryogenesis, highest levels are found in the central and peripheral nervous systems with lower expression also detected in the ectoderm and mesoderm. In adults, high levels are present in the head and body of both sexes with higher expression in testis than ovary. In the ovary, expressed in both germ and follicle cells. In adult head, predominantly neuronal with broad expression throughout the brain and ventral ganglia including the mushroom body.

It is found in the perikaryon. Its subcellular location is the cell projection. It localises to the axon. The protein resides in the dendrite. The protein localises to the synapse. It is found in the cytoplasm. Its subcellular location is the perinuclear region. Functionally, RNA-binding protein involved in translational regulation and required for long-term memory. Required in mushroom body gamma neurons for long-term memory in male courtship. Binds to mRNA 3'-UTRs. In its monomeric form, acts as a translational repressor of genes involved in neuronal growth, synapse formation and protein turnover. In its amyloid-like oligomeric form, acts as a translational activator. The monomeric form reduces poly(A) tail length and destabilizes mRNA while the oligomeric form protects and elongates the poly(A) tail and stabilizes mRNA. Involved in asymmetric cell division in the central nervous system. Plays a role in synapse formation and morphology at neuromuscular junctions by modulating the translation of the tumor suppressor brat. Required for the progression of spermatogenesis through meiosis and for sperm differentiation. During sperm differentiation, required to asymmetrically localize and activate the translation of protein kinase aPKC mRNAs which is necessary for spermatid cyst polarization. Also required during spermatid cyst polarization for localization and translation of its own mRNA. Its function is as follows. Required for initial memory acquisition. Following subsequent late dopaminergic pathway activation, recruits isoform B into a complex to activate translation of CaMKII which is required for long-term memory consolidation. The chain is Translational regulator orb2 from Drosophila melanogaster (Fruit fly).